Here is a 179-residue protein sequence, read N- to C-terminus: uncharacterized protein (179 aa).

3 helical membrane-spanning segments follow: residues 29–49, 76–96, and 97–117; these read LLGI…GPLI, AKHM…DAYS, and GAII…LLWA.

It belongs to the DP1 family.

Its subcellular location is the membrane. This is an uncharacterized protein from Encephalitozoon cuniculi (strain GB-M1) (Microsporidian parasite).